A 396-amino-acid chain; its full sequence is Tail sheath protein (396 aa).

It belongs to the myoviridae tail sheath protein family. As to quaternary structure, homomultimer.

The protein localises to the virion. It localises to the host cytoplasm. Functionally, polymerizes as an extended helical structure around the baseplate-tail tube complex. During ejection, the sheath shifts to a contracted form, thereby making the inner tail tube protrude through the host cell envelope. The polypeptide is Tail sheath protein (FI) (Enterobacteriaceae (Bacteriophage P2)).